The primary structure comprises 428 residues: 3-phosphoshikimate 1-carboxyvinyltransferase (428 aa).

3-phosphoshikimate-binding residues include Lys-19, Ser-20, and Arg-24. Position 19 (Lys-19) interacts with phosphoenolpyruvate. Residues Gly-91 and Arg-119 each contribute to the phosphoenolpyruvate site. Residues Ser-164, Gln-166, Asp-312, and Lys-339 each contribute to the 3-phosphoshikimate site. Residue Gln-166 participates in phosphoenolpyruvate binding. Catalysis depends on Asp-312, which acts as the Proton acceptor. Phosphoenolpyruvate contacts are provided by Arg-343 and Arg-386.

Belongs to the EPSP synthase family. In terms of assembly, monomer.

The protein localises to the cytoplasm. It catalyses the reaction 3-phosphoshikimate + phosphoenolpyruvate = 5-O-(1-carboxyvinyl)-3-phosphoshikimate + phosphate. It participates in metabolic intermediate biosynthesis; chorismate biosynthesis; chorismate from D-erythrose 4-phosphate and phosphoenolpyruvate: step 6/7. Catalyzes the transfer of the enolpyruvyl moiety of phosphoenolpyruvate (PEP) to the 5-hydroxyl of shikimate-3-phosphate (S3P) to produce enolpyruvyl shikimate-3-phosphate and inorganic phosphate. The protein is 3-phosphoshikimate 1-carboxyvinyltransferase of Bacillus licheniformis (strain ATCC 14580 / DSM 13 / JCM 2505 / CCUG 7422 / NBRC 12200 / NCIMB 9375 / NCTC 10341 / NRRL NRS-1264 / Gibson 46).